A 510-amino-acid polypeptide reads, in one-letter code: GMP synthase [glutamine-hydrolyzing] (510 aa).

Residues L5–D195 enclose the Glutamine amidotransferase type-1 domain. C82 functions as the Nucleophile in the catalytic mechanism. Active-site residues include H169 and E171. The GMPS ATP-PPase domain maps to W196–R385. S223–S229 lines the ATP pocket.

As to quaternary structure, homodimer.

The catalysed reaction is XMP + L-glutamine + ATP + H2O = GMP + L-glutamate + AMP + diphosphate + 2 H(+). Its pathway is purine metabolism; GMP biosynthesis; GMP from XMP (L-Gln route): step 1/1. Catalyzes the synthesis of GMP from XMP. The polypeptide is GMP synthase [glutamine-hydrolyzing] (Clostridium acetobutylicum (strain ATCC 824 / DSM 792 / JCM 1419 / IAM 19013 / LMG 5710 / NBRC 13948 / NRRL B-527 / VKM B-1787 / 2291 / W)).